Here is a 139-residue protein sequence, read N- to C-terminus: Invertebrate-type lysozyme 3 (139 aa).

The signal sequence occupies residues 1–18 (MFVKSLVFLTIAVAYASA). One can recognise an I-type lysozyme domain in the interval 19-138 (DCLHCICMRE…WNGIKSCCGC (120 aa)). 7 disulfides stabilise this stretch: C20–C106, C23–C138, C25–C31, C36–C45, C58–C86, C76–C82, and C98–C120. The active-site Proton donor is E28. The active-site Nucleophile is the D39. 51–57 (KLPYYED) is a binding site for substrate. Substrate-binding positions include Y90 and 113–115 (HNG).

Belongs to the glycosyl hydrolase 22 family. Type-I lysozyme subfamily. As to expression, expressed in pharynx grinder muscle pm7, isthmus marginal cell mc2 and pharyngeal muscle cell pm5, intestinal cells and at lower levels in coelomocytes and epidermis. Expressed at low levels in intestine.

It is found in the late endosome lumen. The protein localises to the recycling endosome lumen. Its subcellular location is the lysosome lumen. The protein resides in the secreted. The enzyme catalyses Hydrolysis of (1-&gt;4)-beta-linkages between N-acetylmuramic acid and N-acetyl-D-glucosamine residues in a peptidoglycan and between N-acetyl-D-glucosamine residues in chitodextrins.. Has bacteriolytic activity against Gram-positive bacteria. Plays a role in defense against bacterial pathogens. Involved in pharyngeal grinder function by enabling proper lysis of ingested bacteria. The sequence is that of Invertebrate-type lysozyme 3 from Caenorhabditis elegans.